The primary structure comprises 466 residues: Ribulose bisphosphate carboxylase large chain (466 aa).

Position 5 is an N6,N6,N6-trimethyllysine (Lys-5). Positions 114 and 164 each coordinate substrate. The active-site Proton acceptor is the Lys-166. Position 168 (Lys-168) interacts with substrate. Mg(2+) contacts are provided by Lys-192, Asp-194, and Glu-195. Lys-192 is modified (N6-carboxylysine). His-285 acts as the Proton acceptor in catalysis. Residues Arg-286, His-318, and Ser-370 each contribute to the substrate site.

The protein belongs to the RuBisCO large chain family. Type I subfamily. Heterohexadecamer of 8 large chains and 8 small chains; disulfide-linked. The disulfide link is formed within the large subunit homodimers. Mg(2+) is required as a cofactor. In terms of processing, the disulfide bond which can form in the large chain dimeric partners within the hexadecamer appears to be associated with oxidative stress and protein turnover.

It localises to the plastid. The protein resides in the chloroplast. It carries out the reaction 2 (2R)-3-phosphoglycerate + 2 H(+) = D-ribulose 1,5-bisphosphate + CO2 + H2O. The enzyme catalyses D-ribulose 1,5-bisphosphate + O2 = 2-phosphoglycolate + (2R)-3-phosphoglycerate + 2 H(+). Functionally, ruBisCO catalyzes two reactions: the carboxylation of D-ribulose 1,5-bisphosphate, the primary event in carbon dioxide fixation, as well as the oxidative fragmentation of the pentose substrate in the photorespiration process. Both reactions occur simultaneously and in competition at the same active site. The chain is Ribulose bisphosphate carboxylase large chain from Caltha palustris (Yellow marsh marigold).